The chain runs to 917 residues: Hexokinase-2 (917 aa).

Residue Met-1 is modified to N-acetylmethionine. Residues Met-1 to His-16 form a mitochondrial-binding peptide (MBP) region. Hexokinase domains are found at residues His-16–Ala-458 and Ala-464–Ala-906. ATP-binding positions include Arg-30 and Asp-84–Asn-89. The tract at residues Asp-73–Val-207 is hexokinase small subdomain 1. Asp-84–Thr-88 contributes to the D-glucose 6-phosphate binding site. D-glucose-binding positions include Ser-155–Phe-156, Thr-172–Lys-173, Asn-208–Asp-209, Asn-235, Glu-260, and Gln-291–Glu-294. Residues Asn-208 to Asp-447 form a hexokinase large subdomain 1 region. Asp-209 is a D-glucose 6-phosphate binding site. Asp-413–Ser-415 lines the D-glucose 6-phosphate pocket. Lys-425–Arg-426 is an ATP binding site. Residues Ser-449 and Asp-532–Thr-536 each bind D-glucose 6-phosphate. Residues Asp-521–Val-655 are hexokinase small subdomain 2. Asp-532–Asn-537 is an ATP binding site. D-glucose contacts are provided by residues Ser-603–Phe-604, Thr-620–Lys-621, and Asn-656–Asp-657. A hexokinase large subdomain 2 region spans residues Asn-656 to Asp-895. Residues Asp-657 and Thr-680 each contribute to the D-glucose 6-phosphate site. Residue Thr-680 coordinates ATP. D-glucose contacts are provided by residues Ser-682–Asn-683, Glu-708, and Gln-739–Glu-742. ATP-binding positions include Gly-747 to Met-748, Thr-784 to Ser-788, and Thr-863 to Leu-867. Residues Asp-861–Thr-863 and Ser-897 each bind D-glucose 6-phosphate.

Belongs to the hexokinase family. In terms of assembly, monomer. Interacts with TIGAR; the interaction increases hexokinase activity in a hypoxia- and HIF1A-dependent manner.

It is found in the mitochondrion outer membrane. It localises to the cytoplasm. The protein localises to the cytosol. The enzyme catalyses a D-hexose + ATP = a D-hexose 6-phosphate + ADP + H(+). It carries out the reaction D-fructose + ATP = D-fructose 6-phosphate + ADP + H(+). The catalysed reaction is D-glucose + ATP = D-glucose 6-phosphate + ADP + H(+). Its pathway is carbohydrate metabolism; hexose metabolism. It participates in carbohydrate degradation; glycolysis; D-glyceraldehyde 3-phosphate and glycerone phosphate from D-glucose: step 1/4. With respect to regulation, hexokinase activity is specifically inhibited by 2,6-disubstituted glucosamines. Catalyzes the phosphorylation of hexose, such as D-glucose and D-fructose, to hexose 6-phosphate (D-glucose 6-phosphate and D-fructose 6-phosphate, respectively). Mediates the initial step of glycolysis by catalyzing phosphorylation of D-glucose to D-glucose 6-phosphate. Plays a key role in maintaining the integrity of the outer mitochondrial membrane by preventing the release of apoptogenic molecules from the intermembrane space and subsequent apoptosis. The sequence is that of Hexokinase-2 from Equus zebra (Mountain zebra).